Consider the following 131-residue polypeptide: Type 3 secretion system pilotin (131 aa).

A signal peptide spans 1–15 (MSRIIALIISFLLVG). The N-palmitoyl cysteine moiety is linked to residue Cys-16. Residue Cys-16 is the site of S-diacylglycerol cysteine attachment.

Belongs to the ExsB/YscW family. Interacts with YscC/SctC.

The protein resides in the cell outer membrane. Involved in the synthesis of the type III secretion system (T3SS), also called injectisome, which is used to inject bacterial effector proteins into eukaryotic host cells. Pilot protein that is required for the proper localization of the secretin YscC/SctC in the outer membrane. Also required for efficient oligomerization of YscC/SctC and stabilization of the oligomers. This chain is Type 3 secretion system pilotin, found in Yersinia enterocolitica.